The primary structure comprises 327 residues: Xylosidase/arabinosidase 43A (327 aa).

The Proton acceptor role is filled by Asp12. Glu228 (proton donor) is an active-site residue.

Belongs to the glycosyl hydrolase 43 family.

It is found in the secreted. It catalyses the reaction Hydrolysis of (1-&gt;4)-beta-D-xylans, to remove successive D-xylose residues from the non-reducing termini.. The catalysed reaction is Hydrolysis of terminal non-reducing alpha-L-arabinofuranoside residues in alpha-L-arabinosides.. With respect to regulation, activity is inhibited by Ag(+), Li(+), Pb(2+), Cu(2+), Cr(3+), Co(3+), Fe(3+), Ni(2+), Mg(2+), Zn(2+), EDTA and SDS; but not by Mn(2+), Ca(2+) and beta-mercaptoethanol. Functionally, bifunctional beta-xylosidase/alpha-L-arabinosidases with a low level of xylanase activity. Is most active on 4-nitrophenyl beta-D-xylopyranoside (pNPX) (defined as 100%), moderate on p-nitrophenyl-alpha-L-arabinofuranoside (pNPA) (23.7%), and weak on beechwood xylan (15.9%) and birchwood xylan (15.2%). Is able to attack xylooligosacchardies with degrees of polymerisation of 2-5, releasing the amounts of reducing sugars in the order of xylopentose &gt; xylotetraose &gt; xylotriose &gt; xylobiose, i.e. the rate of xylose released from xylooligosacchardies increased with the chain length. No activity is detected in the presence of carboxymethyl cellulose-sodium (CMC-Na), sugar beet arabinan, AZCL-arabinan (debranched), 4-nitrophenyl a-D - galactopyranoside, 2-nitrophenyl beta-D-galactopyranoside, and 4-nitrophenyl alpha-D-glucopyranoside. The polypeptide is Xylosidase/arabinosidase 43A (Humicola insolens (Soft-rot fungus)).